Here is a 154-residue protein sequence, read N- to C-terminus: Interleukin-2 (154 aa).

Residues 1-20 (MYKIQLLSCIALTLILVTNS) form the signal peptide. Cysteines 78 and 126 form a disulfide. Asn-111 carries N-linked (GlcNAc...) asparagine glycosylation.

It belongs to the IL-2 family.

The protein localises to the secreted. Functionally, cytokine produced by activated CD4-positive helper T-cells and to a lesser extend activated CD8-positive T-cells and natural killer (NK) cells that plays pivotal roles in the immune response and tolerance. Binds to a receptor complex composed of either the high-affinity trimeric IL-2R (IL2RA/CD25, IL2RB/CD122 and IL2RG/CD132) or the low-affinity dimeric IL-2R (IL2RB and IL2RG). Interaction with the receptor leads to oligomerization and conformation changes in the IL-2R subunits resulting in downstream signaling starting with phosphorylation of JAK1 and JAK3. In turn, JAK1 and JAK3 phosphorylate the receptor to form a docking site leading to the phosphorylation of several substrates including STAT5. This process leads to activation of several pathways including STAT, phosphoinositide-3-kinase/PI3K and mitogen-activated protein kinase/MAPK pathways. Functions as a T-cell growth factor and can increase NK-cell cytolytic activity as well. Promotes strong proliferation of activated B-cells and subsequently immunoglobulin production. Plays a pivotal role in regulating the adaptive immune system by controlling the survival and proliferation of regulatory T-cells, which are required for the maintenance of immune tolerance. Moreover, participates in the differentiation and homeostasis of effector T-cell subsets, including Th1, Th2, Th17 as well as memory CD8-positive T-cells. This Felis catus (Cat) protein is Interleukin-2 (IL2).